The following is a 113-amino-acid chain: Pro-corazonin (113 aa).

A signal peptide spans M1–A19. Q20 is subject to Pyrrolidone carboxylic acid. N30 carries the asparagine amide modification. The disordered stretch occupies residues L74–V96. The span at T82 to V96 shows a compositional bias: polar residues.

It belongs to the corazonin family. As to expression, four pairs of lateral neurosecretory cells in the brains of late instar larvae, pupae and adults.

It is found in the secreted. In terms of biological role, cardioactive peptide. Corazonin is probably involved in the physiological regulation of the heart beat. In Galleria mellonella (Greater wax moth), this protein is Pro-corazonin.